The sequence spans 123 residues: Small ribosomal subunit protein uS12 (123 aa).

Aspartate 89 carries the post-translational modification 3-methylthioaspartic acid.

Belongs to the universal ribosomal protein uS12 family. Part of the 30S ribosomal subunit. Contacts proteins S8 and S17. May interact with IF1 in the 30S initiation complex.

Functionally, with S4 and S5 plays an important role in translational accuracy. In terms of biological role, interacts with and stabilizes bases of the 16S rRNA that are involved in tRNA selection in the A site and with the mRNA backbone. Located at the interface of the 30S and 50S subunits, it traverses the body of the 30S subunit contacting proteins on the other side and probably holding the rRNA structure together. The combined cluster of proteins S8, S12 and S17 appears to hold together the shoulder and platform of the 30S subunit. The chain is Small ribosomal subunit protein uS12 from Granulibacter bethesdensis (strain ATCC BAA-1260 / CGDNIH1).